A 448-amino-acid polypeptide reads, in one-letter code: Bifunctional protein GlmU (448 aa).

Residues 1 to 232 (MSDRSLLVVV…ADEVAGVNSR (232 aa)) form a pyrophosphorylase region. Residues 11 to 14 (LAAG), lysine 25, glutamine 78, and 83 to 84 (GT) contribute to the UDP-N-acetyl-alpha-D-glucosamine site. Aspartate 108 is a binding site for Mg(2+). UDP-N-acetyl-alpha-D-glucosamine-binding residues include glycine 144, glutamate 158, asparagine 173, and asparagine 230. Asparagine 230 lines the Mg(2+) pocket. The linker stretch occupies residues 233–253 (VQLAEAEAILQRRLRLAAMAG). Positions 254 to 448 (GATLVAPETV…FRAARSKPKG (195 aa)) are N-acetyltransferase. UDP-N-acetyl-alpha-D-glucosamine contacts are provided by arginine 319 and lysine 337. The active-site Proton acceptor is histidine 349. Residues tyrosine 352 and asparagine 363 each coordinate UDP-N-acetyl-alpha-D-glucosamine. Acetyl-CoA contacts are provided by residues alanine 366, 372-373 (NY), threonine 409, and arginine 426.

In the N-terminal section; belongs to the N-acetylglucosamine-1-phosphate uridyltransferase family. The protein in the C-terminal section; belongs to the transferase hexapeptide repeat family. As to quaternary structure, homotrimer. Mg(2+) serves as cofactor.

The protein localises to the cytoplasm. The enzyme catalyses alpha-D-glucosamine 1-phosphate + acetyl-CoA = N-acetyl-alpha-D-glucosamine 1-phosphate + CoA + H(+). The catalysed reaction is N-acetyl-alpha-D-glucosamine 1-phosphate + UTP + H(+) = UDP-N-acetyl-alpha-D-glucosamine + diphosphate. Its pathway is nucleotide-sugar biosynthesis; UDP-N-acetyl-alpha-D-glucosamine biosynthesis; N-acetyl-alpha-D-glucosamine 1-phosphate from alpha-D-glucosamine 6-phosphate (route II): step 2/2. The protein operates within nucleotide-sugar biosynthesis; UDP-N-acetyl-alpha-D-glucosamine biosynthesis; UDP-N-acetyl-alpha-D-glucosamine from N-acetyl-alpha-D-glucosamine 1-phosphate: step 1/1. It functions in the pathway bacterial outer membrane biogenesis; LPS lipid A biosynthesis. In terms of biological role, catalyzes the last two sequential reactions in the de novo biosynthetic pathway for UDP-N-acetylglucosamine (UDP-GlcNAc). The C-terminal domain catalyzes the transfer of acetyl group from acetyl coenzyme A to glucosamine-1-phosphate (GlcN-1-P) to produce N-acetylglucosamine-1-phosphate (GlcNAc-1-P), which is converted into UDP-GlcNAc by the transfer of uridine 5-monophosphate (from uridine 5-triphosphate), a reaction catalyzed by the N-terminal domain. This Xanthobacter autotrophicus (strain ATCC BAA-1158 / Py2) protein is Bifunctional protein GlmU.